A 627-amino-acid chain; its full sequence is Sphingomyelin phosphodiesterase (627 aa).

Positions 1 to 44 are cleaved as a signal peptide; that stretch reads MPHHRASSGQDHLRAGWEQRLERSLPAPRVGLLWMGLGLALVLA. In terms of domain architecture, Saposin B-type spans 83-167; sequence QNLTCPACKV…LLGSSCGHWD (85 aa). A glycan (N-linked (GlcNAc...) asparagine) is linked at Asn-84. 3 disulfide bridges follow: Cys-87/Cys-163, Cys-90/Cys-155, and Cys-118/Cys-129. Asn-173 carries N-linked (GlcNAc...) asparagine glycosylation. Residues Asp-204 and His-206 each contribute to the Zn(2+) site. Cystine bridges form between Cys-219–Cys-224 and Cys-225–Cys-248. Zn(2+) is bound by residues Asp-276 and Asn-316. N-linked (GlcNAc...) asparagine glycans are attached at residues Asn-333 and Asn-393. An intrachain disulfide couples Cys-383 to Cys-429. 3 residues coordinate Zn(2+): His-423, His-455, and His-457. Position 506 is a phosphoserine (Ser-506). The N-linked (GlcNAc...) asparagine glycan is linked to Asn-518. 2 cysteine pairs are disulfide-bonded: Cys-582–Cys-586 and Cys-592–Cys-605. Asn-611 is a glycosylation site (N-linked (GlcNAc...) asparagine).

This sequence belongs to the acid sphingomyelinase family. Monomer. Interacts with SORT1; the interaction is required for SMPD1 targeting to lysosomes. Zn(2+) serves as cofactor. In terms of processing, proteolytically processed. Mature lysosomal form arises from C-terminal proteolytic processing of pro-sphingomyelin phosphodiesterase. Post-translationally, both lysosomal and secreted forms are glycosylated but they show a differential pattern of glycosylation. Phosphorylated at Ser-506 by PRKCD upon stress stimuli. Phosphorylation is required for secretion. In terms of processing, this form is generated following cleavage by CASP7 in the extracellular milieu. It shows increased activity.

It localises to the lysosome. Its subcellular location is the lipid droplet. It is found in the secreted. The protein localises to the extracellular space. It catalyses the reaction a sphingomyelin + H2O = phosphocholine + an N-acylsphing-4-enine + H(+). The catalysed reaction is N-(octadecanoyl)-sphing-4-enine-1-phosphocholine + H2O = N-octadecanoylsphing-4-enine + phosphocholine + H(+). The enzyme catalyses a 1,2-diacyl-sn-glycero-3-phosphocholine + H2O = phosphocholine + a 1,2-diacyl-sn-glycerol + H(+). It carries out the reaction 1,2-dihexadecanoyl-sn-glycero-3-phosphocholine + H2O = 1,2-dihexadecanoyl-sn-glycerol + phosphocholine + H(+). With respect to regulation, hydrolysis of liposomal sphingomyelin is stimulated by incorporation of diacylglycerol (DAG), ceramide and free fatty acids into the liposomal membranes. Phosphatidylcholine hydrolysis is inhibited by incorporation of cholesterol, ceramide, DAG, monoacylglycerol and fatty acids. In terms of biological role, converts sphingomyelin to ceramide. Exists as two enzymatic forms that arise from alternative trafficking of a single protein precursor, one that is targeted to the endolysosomal compartment, whereas the other is released extracellularly. However, in response to various forms of stress, lysosomal exocytosis may represent a major source of the secretory form. Its function is as follows. In the lysosomes, converts sphingomyelin to ceramide. Plays an important role in the export of cholesterol from the intraendolysosomal membranes. Also has phospholipase C activities toward 1,2-diacylglycerolphosphocholine and 1,2-diacylglycerolphosphoglycerol. Modulates stress-induced apoptosis through the production of ceramide. Functionally, when secreted, modulates cell signaling with its ability to reorganize the plasma membrane by converting sphingomyelin to ceramide. Secreted form is increased in response to stress and inflammatory mediators such as IL1B, IFNG or TNF as well as upon infection with bacteria and viruses. Produces the release of ceramide in the outer leaflet of the plasma membrane playing a central role in host defense. Ceramide reorganizes these rafts into larger signaling platforms that are required to internalize P.aeruginosa, induce apoptosis and regulate the cytokine response in infected cells. In wounded cells, the lysosomal form is released extracellularly in the presence of Ca(2+) and promotes endocytosis and plasma membrane repair. This form is generated following cleavage by CASP7 in the extracellular milieu in response to bacterial infection. It shows increased ability to convert sphingomyelin to ceramide and promotes plasma membrane repair. Plasma membrane repair by ceramide counteracts the action of gasdermin-D (GSDMD) perforin (PRF1) pores that are formed in response to bacterial infection. In terms of biological role, (Microbial infection) Secretion is activated by bacteria such as P.aeruginosa, this activation results in the release of ceramide in the outer leaflet of the plasma membrane which facilitates the infection. The polypeptide is Sphingomyelin phosphodiesterase (Mus musculus (Mouse)).